The following is a 26-amino-acid chain: Turripeptide OL49 (26 aa).

In terms of processing, contains 3 disulfide bonds. In terms of tissue distribution, expressed by the venom duct.

Its subcellular location is the secreted. In terms of biological role, acts as a neurotoxin by inhibiting an ion channel. The polypeptide is Turripeptide OL49 (Iotyrris olangoensis (Sea snail)).